Reading from the N-terminus, the 388-residue chain is Succinate--CoA ligase [ADP-forming] subunit beta (388 aa).

Positions 9 to 244 (KGVLSSFGVT…PDEYAAEELE (236 aa)) constitute an ATP-grasp domain. ATP-binding positions include K46, 53–55 (GRG), E99, V102, and E107. Mg(2+) contacts are provided by N199 and D213. Substrate-binding positions include N264 and 320–322 (GIM).

This sequence belongs to the succinate/malate CoA ligase beta subunit family. In terms of assembly, heterotetramer of two alpha and two beta subunits. Mg(2+) is required as a cofactor.

It carries out the reaction succinate + ATP + CoA = succinyl-CoA + ADP + phosphate. It catalyses the reaction GTP + succinate + CoA = succinyl-CoA + GDP + phosphate. It functions in the pathway carbohydrate metabolism; tricarboxylic acid cycle; succinate from succinyl-CoA (ligase route): step 1/1. In terms of biological role, succinyl-CoA synthetase functions in the citric acid cycle (TCA), coupling the hydrolysis of succinyl-CoA to the synthesis of either ATP or GTP and thus represents the only step of substrate-level phosphorylation in the TCA. The beta subunit provides nucleotide specificity of the enzyme and binds the substrate succinate, while the binding sites for coenzyme A and phosphate are found in the alpha subunit. This is Succinate--CoA ligase [ADP-forming] subunit beta from Anaplasma marginale (strain St. Maries).